We begin with the raw amino-acid sequence, 472 residues long: Transmembrane protein 8B (472 aa).

Positions 1 to 36 (MNMPQSLGNQPLPPEPPSLGTPAEGPGTTSPPEHCW) are disordered. Topologically, residues 1–233 (MNMPQSLGNQ…ADALTYGFQL (233 aa)) are extracellular. Residues Asn92 and Asn100 are each glycosylated (N-linked (GlcNAc...) asparagine). The 40-residue stretch at 182–221 (FLSPCVDDCGPYGQCKLLRTHNYLYAACECKAGWRGWGCT) folds into the EGF-like domain. 3 disulfide bridges follow: Cys186-Cys196, Cys190-Cys209, and Cys211-Cys220. Residues 234–254 (LSTLLLCLSNLMFLPPVVLAI) traverse the membrane as a helical segment. Topologically, residues 255-257 (RSR) are cytoplasmic. Residues 258-277 (YVLEAAVYTFTMFFSTFYHA) form a helical membrane-spanning segment. At 278 to 292 (CDQPGIVVFCIMDYD) the chain is on the extracellular side. Residues 293–313 (VLQFCDFLGSLMSVWVTVIAM) traverse the membrane as a helical segment. Residues 314-315 (AR) are Cytoplasmic-facing. A helical transmembrane segment spans residues 316–336 (LQPVVKQVLYLLGAMLLSMAL). The Extracellular portion of the chain corresponds to 337 to 342 (QLDRHG). The chain crosses the membrane as a helical span at residues 343-363 (LWNLLGPSLFALGILATAWTV). Over 364 to 379 (RSVRRRHCYPPTWRRW) the chain is Cytoplasmic. The helical transmembrane segment at 380 to 400 (LFYLCPGSLIAGSAVLLYAFV) threads the bilayer. Residues 401–405 (ETRDN) are Extracellular-facing. The helical transmembrane segment at 406–426 (YFYIHSIWHMLIAGSVGFLLP) threads the bilayer. The Cytoplasmic segment spans residues 427–472 (PRAKTDHGVPSGARARGCGYQLCINEQEELGLVGPGGATVSSICAS).

It belongs to the TMEM8 family. As to quaternary structure, isoform 2 (via its cytoplasmic part) interacts with EZR. Post-translationally, isoform 2 is N-glycosylated.

Its subcellular location is the cell membrane. It localises to the cytoplasm. The protein localises to the nucleus. The protein resides in the mitochondrion. It is found in the endoplasmic reticulum. Its function is as follows. May function as a regulator of the EGFR pathway. Probable tumor suppressor which may function in cell growth, proliferation and adhesion. This chain is Transmembrane protein 8B (TMEM8B), found in Homo sapiens (Human).